A 245-amino-acid polypeptide reads, in one-letter code: Probable phosphatase YE2421 (245 aa).

Positions 7, 9, 15, 40, 73, 101, 131, 192, and 194 each coordinate Zn(2+).

This sequence belongs to the PHP family. As to quaternary structure, homotrimer. Requires Zn(2+) as cofactor.

The polypeptide is Probable phosphatase YE2421 (Yersinia enterocolitica serotype O:8 / biotype 1B (strain NCTC 13174 / 8081)).